The following is a 263-amino-acid chain: UDP-N-acetylenolpyruvoylglucosamine reductase (263 aa).

Arginine 146 is a catalytic residue. The active-site Proton donor is serine 188. Glutamate 258 is a catalytic residue.

It belongs to the MurB family. It depends on FAD as a cofactor.

The protein localises to the cytoplasm. It catalyses the reaction UDP-N-acetyl-alpha-D-muramate + NADP(+) = UDP-N-acetyl-3-O-(1-carboxyvinyl)-alpha-D-glucosamine + NADPH + H(+). It participates in cell wall biogenesis; peptidoglycan biosynthesis. Functionally, cell wall formation. The chain is UDP-N-acetylenolpyruvoylglucosamine reductase from Helicobacter hepaticus (strain ATCC 51449 / 3B1).